The primary structure comprises 301 residues: MANLRDIRKKIGSVKNTQKITHAMKLVSTSKLRKAEEVARNSRAYALKLDAVFDDVLSKMKNQGIEDIQSKYFRELERLEIKKVDIIFITADKGLCGGFNTNTIKKVLACTNEYKEKDIKVRLCGIGKKGNEYFSFNGIEVLDKINNLSSMPNYERAQEFMKKVVEDYLSGKTDKVIIIHNGFKNMISQEIRVKTILPIGYKIIHQNPQPNEAQETITSEPSGSEDEILDSLAEKYVEYSLYYALIDSLAAEHSARMQAMDTATNNAKDLVKTLTISYNKARQEAITTELVEINAGVEALK.

The protein belongs to the ATPase gamma chain family. As to quaternary structure, F-type ATPases have 2 components, CF(1) - the catalytic core - and CF(0) - the membrane proton channel. CF(1) has five subunits: alpha(3), beta(3), gamma(1), delta(1), epsilon(1). CF(0) has three main subunits: a, b and c.

It localises to the cell inner membrane. Produces ATP from ADP in the presence of a proton gradient across the membrane. The gamma chain is believed to be important in regulating ATPase activity and the flow of protons through the CF(0) complex. This is ATP synthase gamma chain from Helicobacter pylori (strain HPAG1).